The following is a 381-amino-acid chain: Protein RecA (381 aa).

79-86 (GPESSGKT) is an ATP binding site.

The protein belongs to the RecA family.

It is found in the cytoplasm. Can catalyze the hydrolysis of ATP in the presence of single-stranded DNA, the ATP-dependent uptake of single-stranded DNA by duplex DNA, and the ATP-dependent hybridization of homologous single-stranded DNAs. It interacts with LexA causing its activation and leading to its autocatalytic cleavage. This is Protein RecA from Streptococcus parasanguinis.